A 149-amino-acid chain; its full sequence is Nascent polypeptide-associated complex subunit beta-2 (149 aa).

The region spanning 38-103 (DKDNTKLQAE…PKENTLNGLY (66 aa)) is the NAC-A/B domain.

This sequence belongs to the NAC-beta family. As to quaternary structure, part of the nascent polypeptide-associated complex (NAC), consisting of EGD2 and either EGD1 or BTT1. NAC associates with ribosomes via EGD1 or BTT1.

The protein localises to the cytoplasm. It localises to the nucleus. Acts as a component of the nascent polypeptide-associated complex (NAC), which promotes mitochondrial protein import by enhancing productive ribosome interactions with the outer mitochondrial membrane. Also blocks the inappropriate interaction of ribosomes translating non-secretory nascent polypeptides with translocation sites in the membrane of the endoplasmic reticulum. BTT1 may act as a transcription factor that exert a negative effect on the expression of several genes that are transcribed by RNA polymerase II. The polypeptide is Nascent polypeptide-associated complex subunit beta-2 (BTT1) (Saccharomyces cerevisiae (strain ATCC 204508 / S288c) (Baker's yeast)).